The sequence spans 576 residues: Aspartate--tRNA ligase (576 aa).

Glutamate 171 is an L-aspartate binding site. An aspartate region spans residues 195–198 (QLFK). Residue arginine 217 coordinates L-aspartate. ATP-binding positions include 217–219 (RDE) and glutamine 226. L-aspartate is bound at residue histidine 450. ATP is bound at residue glutamate 484. Arginine 491 contacts L-aspartate. Position 536-539 (536-539 (GLDR)) interacts with ATP.

This sequence belongs to the class-II aminoacyl-tRNA synthetase family. Type 1 subfamily. As to quaternary structure, homodimer.

It localises to the cytoplasm. The catalysed reaction is tRNA(Asp) + L-aspartate + ATP = L-aspartyl-tRNA(Asp) + AMP + diphosphate. Catalyzes the attachment of L-aspartate to tRNA(Asp) in a two-step reaction: L-aspartate is first activated by ATP to form Asp-AMP and then transferred to the acceptor end of tRNA(Asp). This chain is Aspartate--tRNA ligase, found in Buchnera aphidicola subsp. Baizongia pistaciae (strain Bp).